The following is a 72-amino-acid chain: Large ribosomal subunit protein uL29 (72 aa).

This sequence belongs to the universal ribosomal protein uL29 family.

The protein is Large ribosomal subunit protein uL29 of Chlamydia abortus (strain DSM 27085 / S26/3) (Chlamydophila abortus).